The chain runs to 1218 residues: NACHT, LRR and PYD domains-containing protein 1a allele 3 (1218 aa).

Polar residues predominate over residues 1 to 29 (MGESQSKQESNTRVAQHGSQQDVDPTFQT). 2 disordered regions span residues 1-44 (MGES…QVEQ) and 71-91 (EMDHESRRHSHQSKKKLDRSE). The span at 77–87 (RRHSHQSKKKL) shows a compositional bias: basic residues. The NACHT domain maps to 175–484 (QLVIIEGAAG…EFFAAMSYIL (310 aa)). 181 to 188 (GAAGIGKS) lines the ATP pocket. 3 LRR repeats span residues 343–364 (KERNTIIDFNLIGSIPVLLTLC), 673–693 (NLEELDLSGNPLSYSAVRSLC), and 730–750 (RLAELDLRLNDLGDNGVRQLC). A compositionally biased stretch (polar residues) spans 799–815 (TMPTENTDGEESLTSSK). The interval 799-842 (TMPTENTDGEESLTSSKQQQQQSGDKHMEPLGTDDDFWGPSGPV) is disordered. Residues 835 to 968 (FWGPSGPVST…HFAVLENPSF (134 aa)) form a ZU5 region. One can recognise an FIIND domain in the interval 835 to 1118 (FWGPSGPVST…LRPALPRMAS (284 aa)). The tract at residues 969 to 1118 (SPMGVLLRMI…LRPALPRMAS (150 aa)) is UPA. In terms of domain architecture, CARD spans 1122-1211 (DAPALLHFVD…HLIMDLLEKS (90 aa)).

Belongs to the NLRP family. As to quaternary structure, interacts (via LRR repeats) with BCL2 and BCL2L1 (via the loop between motifs BH4 and BH3). Interacts with NOD2; this interaction is enhanced in the presence of muramyl dipeptide (MDP) and increases IL1B release. Interacts with EIF2AK2/PKR; this interaction requires EIF2AK2 activity, is accompanied by EIF2AK2 autophosphorylation and promotes inflammasome assembly in response to danger-associated signals. Interacts with MEFV; this interaction targets Nlrp1a to degradation by autophagy, hence preventing excessive IL1B- and IL18-mediated inflammation. Interacts with DPP9; leading to inhibit activation of the inflammasome. DPP9 acts via formation of a ternary complex, composed of a DPP9 homodimer, one full-length NLRP1 protein, and one cleaved C-terminus of Nlrp1a (NACHT, LRR and PYD domains-containing protein 1a, C-terminus). Interacts with DPP8; leading to inhibit activation of the inflammasome, probably via formation of a ternary complex with DPP8. Interacts with the C-terminal part of Nlrp1a (NACHT, LRR and PYD domains-containing protein 1a, C-terminus) in absence of pathogens and other damage-associated signals. In terms of assembly, interacts with the N-terminal part of Nlrp1a (NACHT, LRR and PYD domains-containing protein 1a, N-terminus) in absence of pathogens and other damage-associated signals. Homomultimer; forms the Nlrp1a inflammasome polymeric complex, a filament composed of homopolymers of this form in response to pathogens and other damage-associated signals. The Nlrp1a inflammasome polymeric complex directly recruits pro-caspase-1 (proCASP1) independently of PYCARD/ASC. Interacts (via CARD domain) with CASP1 (via CARD domain); leading to CASP1 activation. Autocatalytically cleaved. Autocatalytic cleavage in FIIND region occurs constitutively, prior to activation signals, and is required for inflammasome activity (IL1B release), possibly by facilitating CASP1 binding. Both N- and C-terminal parts remain associated non-covalently. Post-translationally, ubiquitinated in response to pathogen-associated signals, leading to its degradation by the proteasome and subsequent release of the cleaved C-terminal part of the protein (NACHT, LRR and PYD domains-containing protein 1a, C-terminus), which polymerizes and forms the Nlrp1a inflammasome.

The protein localises to the cytoplasm. It localises to the cytosol. The protein resides in the nucleus. Its subcellular location is the inflammasome. Activated by pathogens and other damage-associated signals: activation promotes ubiquitination and degradation of the N-terminal part, releasing the cleaved C-terminal part of the protein (NACHT, LRR and PYD domains-containing protein 1a, C-terminus), which polymerizes and forms the Nlrp1a inflammasome. Nlrp1a inflammasome is inhibited by DPP8 and DPP9, which sequester the C-terminal fragment of Nlrp1a (NACHT, LRR and PYD domains-containing protein 1a, C-terminus) in a ternary complex, thereby preventing Nlrp1a oligomerization and activation. Nlrp1a inflammasome is strongly activated by Val-boroPro (Talabostat, PT-100), an inhibitor of dipeptidyl peptidases DPP8 and DPP9. Val-boroPro relieves inhibition of DPP8 and/or DPP9 by promoting disruption of the ternary complex, releasing its C-terminal part from autoinhibition. Not activated by cleavage by B.anthracis lethal toxin (LT) endopeptidase. In terms of biological role, acts as the sensor component of the Nlrp1a inflammasome, which mediates inflammasome activation in response to various pathogen-associated signals, leading to subsequent pyroptosis. Inflammasomes are supramolecular complexes that assemble in the cytosol in response to pathogens and other damage-associated signals and play critical roles in innate immunity and inflammation. Acts as a recognition receptor (PRR): recognizes specific pathogens and other damage-associated signals, such as Val-boroPro inhibitor, and mediates the formation of the inflammasome polymeric complex. In response to pathogen-associated signals, the N-terminal part of Nlrp1a is degraded by the proteasome, releasing the cleaved C-terminal part of the protein (NACHT, LRR and PYD domains-containing protein 1a, C-terminus), which polymerizes to initiate the formation of the inflammasome complex: the inflammasome directly recruits pro-caspase-1 (proCASP1) independently of PYCARD/ASC and promotes caspase-1 (CASP1) activation, which subsequently cleaves and activates inflammatory cytokines IL1B and IL18 and gasdermin-D (GSDMD), leading to pyroptosis. In the absence of GSDMD expression, the Nlrp1a inflammasome is able to recruit and activate CASP8, leading to activation of gasdermin-E (GSDME). Its function is as follows. Constitutes the precursor of the Nlrp1a inflammasome, which mediates autoproteolytic processing within the FIIND domain to generate the N-terminal and C-terminal parts, which are associated non-covalently in absence of pathogens and other damage-associated signals. Functionally, regulatory part that prevents formation of the Nlrp1a inflammasome: in absence of pathogens and other damage-associated signals, interacts with the C-terminal part of Nlrp1a (NACHT, LRR and PYD domains-containing protein 1a, C-terminus), preventing activation of the Nlrp1a inflammasome. In response to pathogen-associated signals, this part is ubiquitinated by the N-end rule pathway and degraded by the proteasome, releasing the cleaved C-terminal part of the protein, which polymerizes and forms the Nlrp1a inflammasome. Constitutes the active part of the Nlrp1a inflammasome. In absence of pathogens and other damage-associated signals, interacts with the N-terminal part of Nlrp1a (NACHT, LRR and PYD domains-containing protein 1a, N-terminus), preventing activation of the Nlrp1a inflammasome. In response to pathogen-associated signals, the N-terminal part of Nlrp1a is degraded by the proteasome, releasing this form, which polymerizes to form the Nlrp1a inflammasome complex: the Nlrp1a inflammasome complex then directly recruits pro-caspase-1 (proCASP1) and promotes caspase-1 (CASP1) activation, leading to gasdermin-D (GSDMD) cleavage and subsequent pyroptosis. This is NACHT, LRR and PYD domains-containing protein 1a allele 3 from Rattus norvegicus (Rat).